The chain runs to 358 residues: Chorismate synthase (358 aa).

Arg46 provides a ligand contact to NADP(+). FMN contacts are provided by residues 123 to 125 (RSS), 235 to 236 (NA), Gly275, 290 to 294 (KATPS), and Arg316.

This sequence belongs to the chorismate synthase family. Homotetramer. The cofactor is FMNH2.

It catalyses the reaction 5-O-(1-carboxyvinyl)-3-phosphoshikimate = chorismate + phosphate. It functions in the pathway metabolic intermediate biosynthesis; chorismate biosynthesis; chorismate from D-erythrose 4-phosphate and phosphoenolpyruvate: step 7/7. Its function is as follows. Catalyzes the anti-1,4-elimination of the C-3 phosphate and the C-6 proR hydrogen from 5-enolpyruvylshikimate-3-phosphate (EPSP) to yield chorismate, which is the branch point compound that serves as the starting substrate for the three terminal pathways of aromatic amino acid biosynthesis. This reaction introduces a second double bond into the aromatic ring system. The protein is Chorismate synthase of Aliarcobacter butzleri (strain RM4018) (Arcobacter butzleri).